A 207-amino-acid polypeptide reads, in one-letter code: Guanylate kinase (207 aa).

Positions 4-184 (GILFIISAPS…AINDLRTIII (181 aa)) constitute a Guanylate kinase-like domain. ATP is bound at residue 11–18 (APSGTGKS).

The protein belongs to the guanylate kinase family.

Its subcellular location is the cytoplasm. The enzyme catalyses GMP + ATP = GDP + ADP. Essential for recycling GMP and indirectly, cGMP. This is Guanylate kinase from Buchnera aphidicola subsp. Schizaphis graminum (strain Sg).